The following is a 312-amino-acid chain: Glyoxylate/hydroxypyruvate reductase A (312 aa).

Residue Arg-227 is part of the active site. Catalysis depends on His-275, which acts as the Proton donor.

Belongs to the D-isomer specific 2-hydroxyacid dehydrogenase family. GhrA subfamily.

Its subcellular location is the cytoplasm. It catalyses the reaction glycolate + NADP(+) = glyoxylate + NADPH + H(+). It carries out the reaction (R)-glycerate + NAD(+) = 3-hydroxypyruvate + NADH + H(+). The enzyme catalyses (R)-glycerate + NADP(+) = 3-hydroxypyruvate + NADPH + H(+). Its function is as follows. Catalyzes the NADPH-dependent reduction of glyoxylate and hydroxypyruvate into glycolate and glycerate, respectively. The protein is Glyoxylate/hydroxypyruvate reductase A of Salmonella heidelberg (strain SL476).